Reading from the N-terminus, the 780-residue chain is Mediator of RNA polymerase II transcription subunit 15 (780 aa).

The interaction with nhr-49 stretch occupies residues 1–124; the sequence is MSEEDWPSPK…PQPTSAQARN (124 aa). The interaction with sbp-1 stretch occupies residues 2–96; it reads SEEDWPSPKF…SPPCTTAALL (95 aa). Disordered regions lie at residues 91-152, 166-363, and 564-597; these read TTAA…APSA, PSPD…QGMM, and GPGPIGRDRNSMSGSSMSGPSSGAPSMNPMGTPN. Positions 125-139 are enriched in low complexity; it reads PPVTVATTQASTTPS. A compositionally biased stretch (gly residues) spans 225–245; sequence PPNGYGGYGMMNGPPGSGAPM. The segment covering 296-316 has biased composition (polar residues); the sequence is QGATPTGPSSVLESLINQPQQ. Low complexity-rich tracts occupy residues 333–353 and 574–594; these read AAQRAAAQQQQQQQQQQQQQR and SMSGSSMSGPSSGAPSMNPMG.

This sequence belongs to the Mediator complex subunit 15 family. Component of the Mediator complex. Interacts with nhr-49, nhr-64 and sbp-1. Expressed in the intestine and head neurons.

The protein localises to the nucleus. In terms of biological role, component of the Mediator complex, a coactivator involved in regulated gene transcription of nearly all RNA polymerase II-dependent genes. Mediator functions as a bridge to convey information from gene-specific regulatory proteins to the basal RNA polymerase II transcription machinery. Mediator is recruited to promoters by direct interactions with regulatory proteins and serves as a scaffold for the assembly of a functional preinitiation complex with RNA polymerase II and the general transcription factors. Required for regulated expression of genes controlling fatty acid desaturation by transcription factors including sbp-1 and nhr-49. Involved in the response to simulated microgravity, in concert with sbp-1, probably acting in the intestine. This Caenorhabditis elegans protein is Mediator of RNA polymerase II transcription subunit 15 (mdt-15).